A 172-amino-acid chain; its full sequence is Translation initiation factor IF-3 (172 aa).

This sequence belongs to the IF-3 family. As to quaternary structure, monomer.

It localises to the cytoplasm. Functionally, IF-3 binds to the 30S ribosomal subunit and shifts the equilibrium between 70S ribosomes and their 50S and 30S subunits in favor of the free subunits, thus enhancing the availability of 30S subunits on which protein synthesis initiation begins. In Oceanobacillus iheyensis (strain DSM 14371 / CIP 107618 / JCM 11309 / KCTC 3954 / HTE831), this protein is Translation initiation factor IF-3.